The following is a 278-amino-acid chain: Phosphonates import ATP-binding protein PhnC 2 (278 aa).

Residues 5 to 253 form the ABC transporter domain; it reads IRVDSLNKTF…FLNELYGAEG (249 aa). Residue 37-44 coordinates ATP; that stretch reads GASGSGKS.

It belongs to the ABC transporter superfamily. Phosphonates importer (TC 3.A.1.9.1) family. As to quaternary structure, the complex is composed of two ATP-binding proteins (PhnC), two transmembrane proteins (PhnE) and a solute-binding protein (PhnD).

It localises to the cell inner membrane. It catalyses the reaction phosphonate(out) + ATP + H2O = phosphonate(in) + ADP + phosphate + H(+). In terms of biological role, part of the ABC transporter complex PhnCDE involved in phosphonates import. Responsible for energy coupling to the transport system. The protein is Phosphonates import ATP-binding protein PhnC 2 of Pseudomonas aeruginosa (strain ATCC 15692 / DSM 22644 / CIP 104116 / JCM 14847 / LMG 12228 / 1C / PRS 101 / PAO1).